A 96-amino-acid chain; its full sequence is uncharacterized protein (96 aa).

Positions 9-86 (EELKSQAQVY…NKYADTVAER (78 aa)) form a coiled coil.

The protein belongs to the WXG100 family. sagEsxA-like subfamily.

This is an uncharacterized protein from Clostridium acetobutylicum (strain ATCC 824 / DSM 792 / JCM 1419 / IAM 19013 / LMG 5710 / NBRC 13948 / NRRL B-527 / VKM B-1787 / 2291 / W).